The sequence spans 65 residues: Protein translocase subunit SecE (65 aa).

Residues 1–34 (MEKLRKFFREVIAEAKKISWPSRKELLTSFGVVL) are Cytoplasmic-facing. Residues 35–51 (VILAVTSVYFFVLDFIF) form a helical membrane-spanning segment. The Extracellular segment spans residues 52-65 (SGVVSAIFKALGIG).

Belongs to the SecE/SEC61-gamma family. In terms of assembly, component of the Sec protein translocase complex. Heterotrimer consisting of SecY, SecE and SecG subunits. The heterotrimers can form oligomers, although 1 heterotrimer is thought to be able to translocate proteins. Interacts with SecDF, and other proteins may be involved. The channel interacts with SecA via subunit SecY.

It localises to the cell inner membrane. Its function is as follows. Essential subunit of the protein translocation channel SecYEG. Clamps together the 2 halves of SecY. May contact the channel plug during translocation. This chain is Protein translocase subunit SecE, found in Thermotoga maritima (strain ATCC 43589 / DSM 3109 / JCM 10099 / NBRC 100826 / MSB8).